A 296-amino-acid polypeptide reads, in one-letter code: Hca operon transcriptional activator HcaR (296 aa).

Residues 1 to 58 (MELRHLRYFVAVAQALNFTRAAEKLHTSQPSLSSQIRDLENCVGVPLLVRDKRKVALT) form the HTH lysR-type domain. Positions 18–38 (FTRAAEKLHTSQPSLSSQIRD) form a DNA-binding region, H-T-H motif.

It belongs to the LysR transcriptional regulatory family.

Transcriptional activator of the hca operon for 3-phenylpropionic acid catabolism. In Escherichia coli (strain K12), this protein is Hca operon transcriptional activator HcaR (hcaR).